A 569-amino-acid polypeptide reads, in one-letter code: Urease subunit alpha (569 aa).

Residues 131-569 (GAIDSHIHFI…LPLAQRYLLL (439 aa)) form the Urease domain. 3 residues coordinate Ni(2+): His-136, His-138, and Lys-219. An N6-carboxylysine modification is found at Lys-219. His-221 serves as a coordination point for substrate. Ni(2+) is bound by residues His-248 and His-274. The active-site Proton donor is the His-322. Asp-362 serves as a coordination point for Ni(2+).

It belongs to the metallo-dependent hydrolases superfamily. Urease alpha subunit family. In terms of assembly, heterotrimer of UreA (gamma), UreB (beta) and UreC (alpha) subunits. Three heterotrimers associate to form the active enzyme. It depends on Ni cation as a cofactor. Carboxylation allows a single lysine to coordinate two nickel ions.

Its subcellular location is the cytoplasm. The enzyme catalyses urea + 2 H2O + H(+) = hydrogencarbonate + 2 NH4(+). The protein operates within nitrogen metabolism; urea degradation; CO(2) and NH(3) from urea (urease route): step 1/1. This chain is Urease subunit alpha, found in Prochlorococcus marinus (strain NATL1A).